The chain runs to 119 residues: Basic phospholipase A2 (119 aa).

Intrachain disulfides connect C11–C71, C27–C118, C29–C45, C44–C99, C51–C92, C60–C85, and C78–C90. Positions 28, 30, and 32 each coordinate Ca(2+). Residue H48 is part of the active site. D49 provides a ligand contact to Ca(2+). D93 is a catalytic residue.

It belongs to the phospholipase A2 family. Group I subfamily. D49 sub-subfamily. Ca(2+) serves as cofactor. In terms of tissue distribution, expressed by the venom gland.

It localises to the secreted. The catalysed reaction is a 1,2-diacyl-sn-glycero-3-phosphocholine + H2O = a 1-acyl-sn-glycero-3-phosphocholine + a fatty acid + H(+). In terms of biological role, snake venom phospholipase A2 (PLA2) that has several activities. It is myotoxic, has weak anticoagulant activity and inhibits neuromuscular transmission by blocking acetylcholine release from the nerve termini. PLA2 catalyzes the calcium-dependent hydrolysis of the 2-acyl groups in 3-sn-phosphoglycerides. The sequence is that of Basic phospholipase A2 from Hydrophis schistosus (Beaked sea snake).